The primary structure comprises 291 residues: Malectin (291 aa).

Residues 1–30 (MLRPRGAEGTAVALLRLLLLLLLLGPKLRG) form the signal peptide. Over 31–268 (PGLGVVGAAG…TPNPYASDNS (238 aa)) the chain is Lumenal. A carbohydrate is bound by residues Y81, Y103, Y130, F131, and D200. The disordered stretch occupies residues 220–264 (LQPHPGLEKKEEEEEEEEYDEGSNLKRQTNKNRVQSGPRTPNPYA). Positions 230 to 240 (EEEEEEEEYDE) are enriched in acidic residues. Residues 244–264 (LKRQTNKNRVQSGPRTPNPYA) show a composition bias toward polar residues. An N-linked (GlcNAc...) asparagine glycan is attached at N267. A helical transmembrane segment spans residues 269–289 (SLMFPILVAFGVFIPTLFCLC). Topologically, residues 290 to 291 (RL) are cytoplasmic.

Belongs to the malectin family. As to quaternary structure, interacts with the oligosaccharyltransferase (OST) complex.

It localises to the endoplasmic reticulum membrane. Its function is as follows. Carbohydrate-binding protein with a strong ligand preference for Glc2-N-glycan. May play a role in the early steps of protein N-glycosylation. This Mus musculus (Mouse) protein is Malectin.